The following is a 406-amino-acid chain: Tyrosine--tRNA ligase (406 aa).

The 'HIGH' region motif lies at proline 48–histidine 57. Positions lysine 232–serine 236 match the 'KMSKS' region motif. An ATP-binding site is contributed by lysine 235. Residues methionine 339–arginine 401 form the S4 RNA-binding domain.

This sequence belongs to the class-I aminoacyl-tRNA synthetase family. TyrS type 2 subfamily. Homodimer.

Its subcellular location is the cytoplasm. The catalysed reaction is tRNA(Tyr) + L-tyrosine + ATP = L-tyrosyl-tRNA(Tyr) + AMP + diphosphate + H(+). Catalyzes the attachment of tyrosine to tRNA(Tyr) in a two-step reaction: tyrosine is first activated by ATP to form Tyr-AMP and then transferred to the acceptor end of tRNA(Tyr). This chain is Tyrosine--tRNA ligase, found in Chlorobaculum tepidum (strain ATCC 49652 / DSM 12025 / NBRC 103806 / TLS) (Chlorobium tepidum).